A 214-amino-acid chain; its full sequence is Cell division protein SepF (214 aa).

The segment at 23-70 (YYDDRAPSRGFPRPRFDDGYGRYDGDDYDDPRREPADCPPPAGYRGGY) is disordered. Basic and acidic residues predominate over residues 36–58 (PRFDDGYGRYDGDDYDDPRREPA).

It belongs to the SepF family. As to quaternary structure, homodimer. Interacts with FtsZ.

It is found in the cytoplasm. In terms of biological role, cell division protein that is part of the divisome complex and is recruited early to the Z-ring. Probably stimulates Z-ring formation, perhaps through the cross-linking of FtsZ protofilaments. Its function overlaps with FtsA. The polypeptide is Cell division protein SepF (Mycolicibacterium paratuberculosis (strain ATCC BAA-968 / K-10) (Mycobacterium paratuberculosis)).